We begin with the raw amino-acid sequence, 601 residues long: MRVVRLLRLRAALTLLGEVPRRPASRGVPGSRRTQKGSGARWEKEKHEDGVKWRQLEHKGPYFAPPYEPLPDGVRFFYEGRPVRLSVAAEEVATFYGRMLDHEYTTKEVFRKNFFNDWRKEMAVEEREVIKSLDKCDFTEIHRYFVDKAAARKVLSREEKQKLKEEAEKLQQEFGYCILDGHQEKIGNFKIEPPGLFRGRGDHPKMGMLKRRITPEDVVINCSRDSKIPEPPAGHQWKEVRSDNTVTWLAAWTESVQNSIKYIMLNPCSKLKGETAWQKFETARRLRGFVDEIRSQYRADWKSREMKTRQRAVALYFIDKLALRAGNEKEDGEAADTVGCCSLRVEHVQLHPEADGCQHVVEFDFLGKDCIRYYNRVPVEKPVYKNLQLFMENKDPRDDLFDRLTTTSLNKHLQELMDGLTAKVFRTYNASITLQEQLRALTRAEDSIAAKILSYNRANRVVAILCNHQRATPSTFEKSMQNLQTKIQAKKEQVAEARAELRRARAEHKAQGDGKSRSVLEKKRRLLEKLQEQLAQLSVQATDKEENKQVALGTSKLNYLDPRISIAWCKRFRVPVEKIYSKTQRERFAWALAMAGEDFEF.

The N-terminal 50 residues, 1–50 (MRVVRLLRLRAALTLLGEVPRRPASRGVPGSRRTQKGSGARWEKEKHEDG), are a transit peptide targeting the mitochondrion. The tract at residues 22-48 (RPASRGVPGSRRTQKGSGARWEKEKHE) is disordered. Interaction with DNA regions lie at residues 261 to 262 (KY), 324 to 329 (RAGNEK), and 421 to 423 (TAK). In terms of domain architecture, Topo IB-type catalytic spans 268 to 601 (CSKLKGETAW…LAMAGEDFEF (334 aa)). Catalysis depends on Tyr-559, which acts as the O-(3'-phospho-DNA)-tyrosine intermediate.

The protein belongs to the type IB topoisomerase family. The cofactor is Ca(2+). Mg(2+) serves as cofactor. In terms of tissue distribution, ubiquitous; highest in skeletal muscle, heart, brain and fetal liver.

It is found in the mitochondrion. It carries out the reaction ATP-independent breakage of single-stranded DNA, followed by passage and rejoining.. Releases the supercoiling and torsional tension of DNA introduced during duplication of mitochondrial DNA by transiently cleaving and rejoining one strand of the DNA duplex. Introduces a single-strand break via transesterification at a target site in duplex DNA. The scissile phosphodiester is attacked by the catalytic tyrosine of the enzyme, resulting in the formation of a DNA-(3'-phosphotyrosyl)-enzyme intermediate and the expulsion of a 5'-OH DNA strand. The free DNA strand then rotates around the intact phosphodiester bond on the opposing strand, thus removing DNA supercoils. Finally, in the religation step, the DNA 5'-OH attacks the covalent intermediate to expel the active-site tyrosine and restore the DNA phosphodiester backbone. In Homo sapiens (Human), this protein is DNA topoisomerase I, mitochondrial (TOP1MT).